The primary structure comprises 642 residues: Dihydrolipoyllysine-residue acetyltransferase component of pyruvate dehydrogenase complex, mitochondrial (642 aa).

A mitochondrion-targeting transit peptide spans 1–85 (MWRVCARRAR…LLGSPSRRSY (85 aa)). Residues 80 to 99 (PSRRSYSLPPHQKVPLPSLS) form a disordered region. Lipoyl-binding domains are found at residues 90 to 166 (HQKV…CITV) and 217 to 293 (HMQI…CIIV). Position 99 is a phosphoserine (S99). An N6-lipoyllysine mark is found at K131 and K258. Residues 313–346 (LKPQAAPPAPPPVAAVPPTPQPVAPTPSAAPAGP) are disordered. Residues 317-337 (AAPPAPPPVAAVPPTPQPVAP) are compositionally biased toward pro residues. The Peripheral subunit-binding (PSBD) domain occupies 351-388 (FVSPLAKKLAAEKGIDLTQVKGTGPEGRIIKKDIDSFV). R456 is a CoA binding site. K461 bears the N6-acetyllysine mark. Residue K468 is modified to N6-succinyllysine. S470 contributes to the CoA binding site. K542 is subject to N6-succinyllysine. Residues S561, N562, and G586 each coordinate CoA. Active-site residues include H615 and D619.

Belongs to the 2-oxoacid dehydrogenase family. Part of the pyruvate dehydrogenase complex (PDHc) that is a multi-enzyme complex composed of multiple copies of three enzymes, pyruvate dehydrogenase (subunits PDH1A and PDHB, E1 component), dihydrolipoamide acetyltransferase (DLAT, E2 component), and dihydrolipoamide dehydrogenase (DLD, E3 component) to which is added an additional protein the E3-binding protein (PDHX, E3BP). In terms of structural architecture, the E2 and E3BP components assemble into a 60meric central core with icosahedral symmetry. The central core is decorated with E1 and E3 proteins. Currently, two alternative models for the E2:E3BP stoichiometry are considered as being either 48:12 (E2(48)-E3BP(12)) or 40:20 (E2(40)-E3BP(20)). Interacts with PDK2 and PDK3. Interacts with SIRT4. Interacts with PDHB. (R)-lipoate serves as cofactor. In terms of processing, delipoylated at Lys-131 and Lys-258 by SIRT4, delipoylation decreases the PHD complex activity.

The protein resides in the mitochondrion matrix. The enzyme catalyses N(6)-[(R)-dihydrolipoyl]-L-lysyl-[protein] + acetyl-CoA = N(6)-[(R)-S(8)-acetyldihydrolipoyl]-L-lysyl-[protein] + CoA. Its function is as follows. As part of the pyruvate dehydrogenase complex, catalyzes the transfers of an acetyl group to a lipoic acid moiety. The pyruvate dehydrogenase complex, catalyzes the overall conversion of pyruvate to acetyl-CoA and CO(2), and thereby links cytoplasmic glycolysis and the mitochondrial tricarboxylic acid (TCA) cycle. This Mus musculus (Mouse) protein is Dihydrolipoyllysine-residue acetyltransferase component of pyruvate dehydrogenase complex, mitochondrial.